The sequence spans 182 residues: Transcription termination/antitermination protein NusG (182 aa).

The 31-residue stretch at 131-161 folds into the KOW domain; the sequence is GEVVRVNEGPFADFNGTVEEVDYEKSRLKVS.

It belongs to the NusG family.

Functionally, participates in transcription elongation, termination and antitermination. The sequence is that of Transcription termination/antitermination protein NusG from Vibrio parahaemolyticus serotype O3:K6 (strain RIMD 2210633).